Reading from the N-terminus, the 157-residue chain is Transcriptional repressor NrdR (157 aa).

The segment covering 1 to 11 (MQCPSCQNTDS) has biased composition (polar residues). The tract at residues 1–21 (MQCPSCQNTDSRVLESRSADT) is disordered. A zinc finger lies at 3-34 (CPSCQNTDSRVLESRSADTGKSVRRRRECLNC). The ATP-cone domain maps to 49 to 139 (ITVIKRSESK…VYRQFNGIND (91 aa)).

The protein belongs to the NrdR family. It depends on Zn(2+) as a cofactor.

Its function is as follows. Negatively regulates transcription of bacterial ribonucleotide reductase nrd genes and operons by binding to NrdR-boxes. This Prochlorococcus marinus (strain MIT 9211) protein is Transcriptional repressor NrdR.